A 257-amino-acid polypeptide reads, in one-letter code: Protein YIPF5 (257 aa).

At 1–124 (MSGFDNFNTD…KASDGSIMNE (124 aa)) the chain is on the cytoplasmic side. A helical transmembrane segment spans residues 125–145 (TDLAGPMVFCLAFGATLLLTG). Position 146 (Lys146) is a topological domain, lumenal. A helical transmembrane segment spans residues 147 to 167 (IQFGYVYGISAIGCLGMYCLL). Residues 168 to 173 (NLMSMT) lie on the Cytoplasmic side of the membrane. Residues 174 to 194 (GVSFGCVASVLGYCLLPMIIL) traverse the membrane as a helical segment. Over 195 to 196 (SS) the chain is Lumenal. The helical transmembrane segment at 197–217 (FGVIFSLQGIMGIILTAAIIG) threads the bilayer. The Cytoplasmic segment spans residues 218-236 (WCSLSASKIFISALAMDGQ). A helical membrane pass occupies residues 237-257 (QLLVAYPCALLYGVFALISVF).

It belongs to the YIP1 family.

It localises to the endoplasmic reticulum membrane. The protein resides in the golgi apparatus. Its subcellular location is the cis-Golgi network membrane. In terms of biological role, plays a role in transport between endoplasmic reticulum and Golgi. The polypeptide is Protein YIPF5 (yipf5) (Danio rerio (Zebrafish)).